A 41-amino-acid polypeptide reads, in one-letter code: Large ribosomal subunit protein bL36 (41 aa).

The protein belongs to the bacterial ribosomal protein bL36 family.

The sequence is that of Large ribosomal subunit protein bL36 from Rhizobium etli (strain CIAT 652).